Here is a 603-residue protein sequence, read N- to C-terminus: Elongation factor 4 (603 aa).

The region spanning 9-191 (SNIRNFSIIA…RIVRQIPPPK (183 aa)) is the tr-type G domain. Residues 21–26 (DHGKST) and 138–141 (NKID) contribute to the GTP site.

It belongs to the TRAFAC class translation factor GTPase superfamily. Classic translation factor GTPase family. LepA subfamily.

Its subcellular location is the cell inner membrane. It carries out the reaction GTP + H2O = GDP + phosphate + H(+). Required for accurate and efficient protein synthesis under certain stress conditions. May act as a fidelity factor of the translation reaction, by catalyzing a one-codon backward translocation of tRNAs on improperly translocated ribosomes. Back-translocation proceeds from a post-translocation (POST) complex to a pre-translocation (PRE) complex, thus giving elongation factor G a second chance to translocate the tRNAs correctly. Binds to ribosomes in a GTP-dependent manner. In Idiomarina loihiensis (strain ATCC BAA-735 / DSM 15497 / L2-TR), this protein is Elongation factor 4.